The chain runs to 289 residues: Probable signal peptidase I (289 aa).

Residues 1-53 (MTETTDSVPEPPSDADQLQPKVSICGLDMPAEVSETAAEAAIGVSEPKKRSAL) are Cytoplasmic-facing. A helical transmembrane segment spans residues 54–74 (WEFAILAVIAIGLYYVMLTFV). The Extracellular portion of the chain corresponds to 75-289 (ARPYLIPSES…VGSVNSQQGQ (215 aa)). Active-site residues include Ser84 and Lys162.

The protein belongs to the peptidase S26 family.

It localises to the cell membrane. It catalyses the reaction Cleavage of hydrophobic, N-terminal signal or leader sequences from secreted and periplasmic proteins.. The chain is Probable signal peptidase I (lepB) from Mycobacterium leprae (strain TN).